Here is a 437-residue protein sequence, read N- to C-terminus: Ribulose bisphosphate carboxylase/oxygenase activase, chloroplastic (437 aa).

Residues 1–10 (MATAVSTIGS) show a composition bias toward polar residues. The disordered stretch occupies residues 1-26 (MATAVSTIGSVNRAPPNLNGSSSSAS). 165-172 (GGKGQGKS) serves as a coordination point for ATP.

It belongs to the RuBisCO activase family.

The protein resides in the plastid. The protein localises to the chloroplast stroma. Functionally, activation of RuBisCO (ribulose-1,5-bisphosphate carboxylase/oxygenase; EC 4.1.1.39) involves the ATP-dependent carboxylation of the epsilon-amino group of lysine leading to a carbamate structure. The sequence is that of Ribulose bisphosphate carboxylase/oxygenase activase, chloroplastic (RCA) from Malus domestica (Apple).